The following is a 195-amino-acid chain: Thymidine kinase (195 aa).

ATP-binding positions include 8 to 15 and 86 to 89; these read GLMGSGKS and DESQ. Catalysis depends on Glu-87, which acts as the Proton acceptor. Residues Cys-146, Cys-151, Cys-184, and His-187 each contribute to the Zn(2+) site.

The protein belongs to the thymidine kinase family. Homotetramer.

It localises to the cytoplasm. It catalyses the reaction thymidine + ATP = dTMP + ADP + H(+). This is Thymidine kinase (tdk) from Bacillus subtilis subsp. natto.